A 610-amino-acid polypeptide reads, in one-letter code: Elongation factor 4 (610 aa).

The tr-type G domain occupies 11–193; sequence EKIRNFSIIA…QIVEKVPAPS (183 aa). GTP contacts are provided by residues 23 to 28 and 140 to 143; these read DHGKST and NKID.

This sequence belongs to the TRAFAC class translation factor GTPase superfamily. Classic translation factor GTPase family. LepA subfamily.

Its subcellular location is the cell membrane. It catalyses the reaction GTP + H2O = GDP + phosphate + H(+). Its function is as follows. Required for accurate and efficient protein synthesis under certain stress conditions. May act as a fidelity factor of the translation reaction, by catalyzing a one-codon backward translocation of tRNAs on improperly translocated ribosomes. Back-translocation proceeds from a post-translocation (POST) complex to a pre-translocation (PRE) complex, thus giving elongation factor G a second chance to translocate the tRNAs correctly. Binds to ribosomes in a GTP-dependent manner. The protein is Elongation factor 4 of Streptococcus uberis (strain ATCC BAA-854 / 0140J).